The following is an 84-amino-acid chain: Large ribosomal subunit protein bL27 (84 aa).

The tract at residues 1–21 is disordered; it reads MAHKKGGGSTKNGRDSNPQYL.

The protein belongs to the bacterial ribosomal protein bL27 family.

The polypeptide is Large ribosomal subunit protein bL27 (Chloroherpeton thalassium (strain ATCC 35110 / GB-78)).